The chain runs to 413 residues: Putative glutamate--cysteine ligase 2 (413 aa).

Positions 392–413 (GGVCALSTPQGDPLPGWAERLH) are disordered.

Belongs to the glutamate--cysteine ligase type 2 family. YbdK subfamily.

It catalyses the reaction L-cysteine + L-glutamate + ATP = gamma-L-glutamyl-L-cysteine + ADP + phosphate + H(+). In terms of biological role, ATP-dependent carboxylate-amine ligase which exhibits weak glutamate--cysteine ligase activity. The protein is Putative glutamate--cysteine ligase 2 of Bordetella bronchiseptica (strain ATCC BAA-588 / NCTC 13252 / RB50) (Alcaligenes bronchisepticus).